We begin with the raw amino-acid sequence, 157 residues long: MFLPHPLLPDLKDLASATAVDHGFELADLQVLAHMQPMTVQIQIRRSSGDDVTLDDCAAFSAPMGEALENSAVLNEAYVLEISSPGIGDHLQSDRDFQTFRRYPVDVIHRDPDGAEQKHSGTLLERTENHLKISIHGRIKQIPRDSILSVELTNPTG.

Belongs to the RimP family.

The protein resides in the cytoplasm. Its function is as follows. Required for maturation of 30S ribosomal subunits. The polypeptide is Ribosome maturation factor RimP (Synechococcus sp. (strain CC9311)).